The chain runs to 269 residues: MERYENLFAQLNVRREGAFVPFVTLGDPGIEQSLKIIDTLIDAGADALELGVPFSDPLADGPTIQNANLRAFAAGVTPTQCFEMLALIREKHPTIPIGLLMYANLVFNNGIDAFYAHCEKVGVDSVLVADVPVEESAPFRQAALRHNIAPIFICPPNADDDLLRQIASYGRGYTYLLSRSGVTGAENRGALPLHHLIEKLKEYHAAPALQGFGISSPVQVSAAVRAGAAGAISGSAIVNIIEKNHNTSPDQMLAELKSFVYAMKAASRV.

Catalysis depends on proton acceptor residues glutamate 49 and aspartate 60.

The protein belongs to the TrpA family. Tetramer of two alpha and two beta chains.

It catalyses the reaction (1S,2R)-1-C-(indol-3-yl)glycerol 3-phosphate + L-serine = D-glyceraldehyde 3-phosphate + L-tryptophan + H2O. The protein operates within amino-acid biosynthesis; L-tryptophan biosynthesis; L-tryptophan from chorismate: step 5/5. In terms of biological role, the alpha subunit is responsible for the aldol cleavage of indoleglycerol phosphate to indole and glyceraldehyde 3-phosphate. This is Tryptophan synthase alpha chain from Salmonella arizonae (strain ATCC BAA-731 / CDC346-86 / RSK2980).